Here is a 1055-residue protein sequence, read N- to C-terminus: Sodium/potassium exporting P-type ATPase 1 (1055 aa).

Over 1-73 (MTPSIGYVDE…GADEKISISK (73 aa)) the chain is Cytoplasmic. A helical transmembrane segment spans residues 74-94 (ILAHQIFNAMVLVLIISLIIA). At 95–99 (LAIKD) the chain is on the extracellular side. The helical transmembrane segment at 100 to 120 (WISGGVIGFVVFINIFVGFIQ) threads the bilayer. Residues 121 to 298 (ELKAEKTMGS…TNVGTPLQRK (178 aa)) are Cytoplasmic-facing. The chain crosses the membrane as a helical span at residues 299-319 (LSWLAILLFWVAVLFAIVVMA). The Extracellular segment spans residues 320–328 (SQEMRVNRN). The helical transmembrane segment at 329–349 (VAIYAICVALSMIPSSLVVVL) threads the bilayer. Residues 350 to 789 (TITMAIGAQV…RMSSNIQKFV (440 aa)) are Cytoplasmic-facing. The active-site 4-aspartylphosphate intermediate is Asp385. Asp385 and Thr387 together coordinate Mg(2+). ATP is bound by residues Thr387, Glu491, Lys544, Arg586, Thr646, Gly647, Asp648, Arg705, and Lys711. Asp730 serves as a coordination point for Mg(2+). Asn733 contacts ATP. A helical membrane pass occupies residues 790-810 (LQLLAENVAQALYLMIGLAFI). Topologically, residues 811 to 816 (DKSGYS) are extracellular. A helical transmembrane segment spans residues 817–837 (VFPLSPVEVLWIIVVTSCFPA). Topologically, residues 838–866 (MGLGQEKASHDILEQPPNATIFTWEVIID) are cytoplasmic. A helical transmembrane segment spans residues 867-887 (MIAYGFWMAVCCLVCFVCIVY). At 888-913 (GKGDGSLGENCNEGSDTGCNLVFRGR) the chain is on the extracellular side. The helical transmembrane segment at 914–934 (SGAFAAFTWCALLLAWECIHL) threads the bilayer. Residues 935-962 (RLSFFKMRPELENPWWKQLAIDLWDNQF) are Cytoplasmic-facing. A helical transmembrane segment spans residues 963–983 (LFWSVMGAIVSVFPVVYIPVI). The Extracellular segment spans residues 984–990 (NNKVFLH). The chain crosses the membrane as a helical span at residues 991-1011 (APIGYEWGLAVAFTILFLIGA). Residues 1012 to 1055 (EGWKWFKRVYYRKSNANNPEYDLERNDPFKEYSSFSKSNTMEIV) are Cytoplasmic-facing.

Belongs to the cation transport ATPase (P-type) (TC 3.A.3) family. Type IID subfamily. It depends on Mg(2+) as a cofactor. The active site is phosphorylated in presence of sodium or potassium and in conditions of higher pH. Not phosphorylated in presence of calcium ions.

Its subcellular location is the cell membrane. The enzyme catalyses Na(+)(in) + ATP + H2O = Na(+)(out) + ADP + phosphate + H(+). It carries out the reaction K(+)(in) + ATP + H2O = K(+)(out) + ADP + phosphate + H(+). Functionally, catalyzes the hydrolysis of ATP coupled with the export of sodium and potassium from the cell. May be an inefficient potassium exporter. May transport other cations such as lithium. Sodium/potassium efflux ATPases are involved in salt tolerance and maintaining the membrane potential across the plasma membrane in high salinity (Na+) or alkaline (K+) environments. The sequence is that of Sodium/potassium exporting P-type ATPase 1 from Schwanniomyces occidentalis (Yeast).